The following is a 230-amino-acid chain: Ropporin-1-like protein (230 aa).

An RIIa domain is found at 17–54 (PELPDILKQFTKAAIRTQPADVLQWSAGYFSALSRGDP).

This sequence belongs to the ropporin family. As to quaternary structure, component of the axonemal radial spoke complex 1 (RS1), at least composed of spoke head proteins RSPH1, RSPH3, RSPH9 and the cilia-specific component RSPH4A or sperm-specific component RSPH6A, spoke stalk proteins RSPH14, DNAJB13, DYDC1, ROPN1L and NME5, and the anchor protein IQUB. May interact with AKAP3. Interacts with FSCB; the interaction increases upon spermatozoa capacitation conditions. Interacts with CFAP61. Post-translationally, sumoylated, sumoylation decreases upon spermatozoa capacitation conditions.

The protein localises to the cell projection. Its subcellular location is the cilium. It is found in the flagellum. In terms of biological role, functions as part of axonemal radial spoke complexes that play an important part in the motility of sperm and cilia. Important for male fertility. With ROPN1, involved in fibrous sheath integrity and sperm motility, plays a role in PKA-dependent signaling processes required for spermatozoa capacitation. The chain is Ropporin-1-like protein (ROPN1L) from Macaca fascicularis (Crab-eating macaque).